We begin with the raw amino-acid sequence, 147 residues long: uncharacterized protein (147 aa).

This is an uncharacterized protein from Homo sapiens (Human).